The sequence spans 367 residues: Pectate trisaccharide-lyase (367 aa).

The N-terminal stretch at 1–27 is a signal peptide; sequence MLMRFSRVVSLVLLLVFTAVLTGAVKA. Residues aspartate 144, aspartate 166, and aspartate 170 each contribute to the Ca(2+) site. The PbH1 1 repeat unit spans residues 151-173; it reads SHHIWIDHCTFVNGNDGAVDIKK. The active site involves arginine 224. The PbH1 2 repeat unit spans residues 263–289; that stretch reads GAKVHVEGNYFMGYGAVMAEAGIAFLP.

Belongs to the polysaccharide lyase 1 family. In terms of assembly, homotetramer. Ca(2+) serves as cofactor.

It localises to the secreted. The catalysed reaction is eliminative cleavage of unsaturated trigalacturonate as the major product from the reducing end of polygalacturonic acid/pectate.. Completely inactivated by EGTA. Its function is as follows. Cleaves unsaturated trigalacturonate from pectin. Activity is highest towards polygalacturonic acid, activity on methylated pectins decreases with an increasing degree of methylation. The protein is Pectate trisaccharide-lyase of Thermotoga maritima (strain ATCC 43589 / DSM 3109 / JCM 10099 / NBRC 100826 / MSB8).